Consider the following 380-residue polypeptide: MAPNLRKSHPLLKMVNSSLIDLPTPSNISSWWNFGSLLGICLMTQILTGLLLAMHYTADTTLAFSSVAHTCRNVQYGWLIRNLHANGASFFFICIYFHIGRGFYYGSYLYKETWNTGVVLLLTLMATAFVGYVLPWGQMSFWGATVITNLFSAIPYIGQTLVEWAWGGFSVDNPTLTRFFALHFLLPFMIAGLTLIHLTFLHESGSNNPLGIVSNCDKIPFHPYFTLKDILGFTLMLLPLTTLALFSPNLLGDPENFTPANPLVTPPHIKPEWYFLFAYAILRSIPNKLGGVLALAASVLILFLIPFLHKAKQRTMTFRPLSQLLFWVLVANLLILTWVGSQPVEHPFIIIGQLASLTYFAILLVLFPIIGTLENKMLNY.

A run of 4 helical transmembrane segments spans residues 34-54 (FGSLLGICLMTQILTGLLLAM), 78-99 (WLIRNLHANGASFFFICIYFHI), 114-134 (WNTGVVLLLTLMATAFVGYVL), and 179-199 (FFALHFLLPFMIAGLTLIHLT). Heme b-binding residues include His-84 and His-98. His-183 and His-197 together coordinate heme b. His-202 lines the a ubiquinone pocket. A run of 4 helical transmembrane segments spans residues 227–247 (LKDILGFTLMLLPLTTLALFS), 289–309 (LGGVLALAASVLILFLIPFLH), 321–341 (LSQLLFWVLVANLLILTWVGS), and 348–368 (FIIIGQLASLTYFAILLVLFP).

The protein belongs to the cytochrome b family. As to quaternary structure, the cytochrome bc1 complex contains 11 subunits: 3 respiratory subunits (MT-CYB, CYC1 and UQCRFS1), 2 core proteins (UQCRC1 and UQCRC2) and 6 low-molecular weight proteins (UQCRH/QCR6, UQCRB/QCR7, UQCRQ/QCR8, UQCR10/QCR9, UQCR11/QCR10 and a cleavage product of UQCRFS1). This cytochrome bc1 complex then forms a dimer. Heme b serves as cofactor.

The protein resides in the mitochondrion inner membrane. Its function is as follows. Component of the ubiquinol-cytochrome c reductase complex (complex III or cytochrome b-c1 complex) that is part of the mitochondrial respiratory chain. The b-c1 complex mediates electron transfer from ubiquinol to cytochrome c. Contributes to the generation of a proton gradient across the mitochondrial membrane that is then used for ATP synthesis. The chain is Cytochrome b (MT-CYB) from Halobaena caerulea (Blue petrel).